We begin with the raw amino-acid sequence, 251 residues long: MAGVLDEALTTVFRTPVRLRAAGRTDAGVHATGQVAHLDVPGTALPNAYPRAPHVGEAEFGPLLRRLGRFLPTDVRVVDITRAPAGFDARFSALRRHYVYRLSTAPWGVLPQQARYVTAWPRPLDVEAMAAASRDLLGLHDFAAFCRHRENATTIRDLQRLDWTRDGDLITARVSADAFCWSMVRSLVGALLAVGENRRPVSWCRELLSATNRSSDYATAPAHGLTLVGVDYPPDDQLAARNLITRDVRSR.

The Nucleophile role is filled by Asp26. Tyr98 contributes to the substrate binding site.

This sequence belongs to the tRNA pseudouridine synthase TruA family. As to quaternary structure, homodimer.

It carries out the reaction uridine(38/39/40) in tRNA = pseudouridine(38/39/40) in tRNA. Functionally, formation of pseudouridine at positions 38, 39 and 40 in the anticodon stem and loop of transfer RNAs. The protein is tRNA pseudouridine synthase A of Mycolicibacterium paratuberculosis (strain ATCC BAA-968 / K-10) (Mycobacterium paratuberculosis).